The primary structure comprises 323 residues: Serine/threonine-protein phosphatase PP1-gamma catalytic subunit (323 aa).

Alanine 2 carries the N-acetylalanine modification. Residues aspartate 64, histidine 66, aspartate 92, and asparagine 124 each contribute to the Mn(2+) site. Histidine 125 acts as the Proton donor in catalysis. Mn(2+) is bound by residues histidine 173 and histidine 248. The disordered stretch occupies residues 302–323; the sequence is KKPNATRPVTPPRGMITKQAKK. Residues threonine 307 and threonine 311 each carry the phosphothreonine modification.

The protein belongs to the PPP phosphatase family. PP-1 subfamily. As to quaternary structure, PP1 comprises a catalytic subunit, PPP1CA, PPP1CB or PPP1CC, which is folded into its native form by inhibitor 2 and glycogen synthetase kinase 3, and then complexed to one or several targeting or regulatory subunits. PPP1R12A, PPP1R12B and PPP1R12C mediate binding to myosin. PPP1R3A (in skeletal muscle), PPP1R3B (in liver), PPP1R3C, PPP1R3D and PPP1R3F (in brain) mediate binding to glycogen. Interacts with cyanobacterial toxin microcystin; disulfide-linked. Interacts with PPP1R3B and PPP1R7. Isoform 2 interacts with SPZ1. Interacts with CDCA2. PPP1R15A and PPP1R15B mediate binding to EIF2S1. Part of a complex containing PPP1R15B, PP1 and NCK1/2. Interacts with IKFZ1; the interaction targets PPP1CC to pericentromeric heterochromatin, dephosphorylates IKAROS, stabilizes it and prevents it from degradation. Interacts with PPP1R42; the interaction is direct. Interacts with NOM1 and PPP1R8. Component of the PTW/PP1 phosphatase complex, composed of PPP1R10/PNUTS, TOX4, WDR82, and PPP1CA or PPP1CB or PPP1CC. Interacts with PPP1R8. Interacts with isoform 1 and isoform 4 NEK2. Interacts with URI1; the interaction is phosphorylation-dependent and occurs in a growth factor-dependent manner. Interacts with FOXP3. Interacts with TMEM225 (via RVxF motif). Interacts with MKI67. Interacts with RRP1B; this targets PPP1CC to the nucleolus. Interacts with PPP1R2B. Found in a complex with PPP1CA, PPP1CC, SHC1 and PEAK1. Interacts with DYNLT4. Interacts (via RVxF motif) with FIRRM; regulates PLK1 kinase activity. Interacts with the KNL1 complex subunit KNL1; the interaction is direct and mutually exclusive with KNL1 binding to microtubules. Component of the SHOC2-MRAS-PP1c (SMP) complex consisting of SHOC2, GTP-bound M-Ras/MRAS and the catalytic subunit of protein phosphatase 1 (either PPP1CA, PPP1CB or PPP1CC). SHOC2 and PP1c preferably bind M-Ras/MRAS, but they also bind K-Ras/KRAS, N-Ras/NRAS and H-Ras/HRAS; these interactions are GTP-dependent and both SHOC2 and PP1c are required to form a stable complex. Interacts with SHOC2 in the absence of Ras GTPases. The cofactor is Mn(2+). In terms of processing, phosphorylated by NEK2.

The protein resides in the cytoplasm. Its subcellular location is the nucleus. It is found in the nucleolus. The protein localises to the nucleoplasm. It localises to the nucleus speckle. The protein resides in the chromosome. Its subcellular location is the centromere. It is found in the kinetochore. The protein localises to the cleavage furrow. It localises to the midbody. The protein resides in the mitochondrion. Its subcellular location is the cytoskeleton. It is found in the microtubule organizing center. The enzyme catalyses O-phospho-L-seryl-[protein] + H2O = L-seryl-[protein] + phosphate. It carries out the reaction O-phospho-L-threonyl-[protein] + H2O = L-threonyl-[protein] + phosphate. Its activity is regulated as follows. Inactivated by binding to URI1. The phosphatase activity of the PPP1R15A-PP1 complex toward EIF2S1 is specifically inhibited by Salubrinal, a drug that protects cells from endoplasmic reticulum stress. Its function is as follows. Protein phosphatase that associates with over 200 regulatory proteins to form highly specific holoenzymes which dephosphorylate hundreds of biological targets. Protein phosphatase 1 (PP1) is essential for cell division, and participates in the regulation of glycogen metabolism, muscle contractility and protein synthesis. Dephosphorylates RPS6KB1. Involved in regulation of ionic conductances and long-term synaptic plasticity. May play an important role in dephosphorylating substrates such as the postsynaptic density-associated Ca(2+)/calmodulin dependent protein kinase II. Component of the PTW/PP1 phosphatase complex, which plays a role in the control of chromatin structure and cell cycle progression during the transition from mitosis into interphase. In balance with CSNK1D and CSNK1E, determines the circadian period length, through the regulation of the speed and rhythmicity of PER1 and PER2 phosphorylation. May dephosphorylate CSNK1D and CSNK1E. Regulates the recruitment of the SKA complex to kinetochores. Dephosphorylates the 'Ser-418' residue of FOXP3 in regulatory T-cells (Treg) from patients with rheumatoid arthritis, thereby inactivating FOXP3 and rendering Treg cells functionally defective. Together with PPP1CA (PP1-alpha subunit), dephosphorylates IFIH1/MDA5 and RIG-I leading to their activation and a functional innate immune response. Core component of the SHOC2-MRAS-PP1c (SMP) holophosphatase complex that regulates the MAPK pathway activation. The SMP complex specifically dephosphorylates the inhibitory phosphorylation at 'Ser-259' of RAF1 kinase, 'Ser-365' of BRAF kinase and 'Ser-214' of ARAF kinase, stimulating their kinase activities. Dephosphorylates MKI67 at the onset of anaphase. The SMP complex enhances the dephosphorylation activity and substrate specificity of PP1c. In Homo sapiens (Human), this protein is Serine/threonine-protein phosphatase PP1-gamma catalytic subunit (PPP1CC).